The following is a 177-amino-acid chain: Large ribosomal subunit protein uL6 (177 aa).

The protein belongs to the universal ribosomal protein uL6 family. Part of the 50S ribosomal subunit.

In terms of biological role, this protein binds to the 23S rRNA, and is important in its secondary structure. It is located near the subunit interface in the base of the L7/L12 stalk, and near the tRNA binding site of the peptidyltransferase center. This is Large ribosomal subunit protein uL6 from Methylocella silvestris (strain DSM 15510 / CIP 108128 / LMG 27833 / NCIMB 13906 / BL2).